The primary structure comprises 464 residues: Cysteine--tRNA ligase (464 aa).

Cys27 is a Zn(2+) binding site. Residues 29-39 (PTVYNFFHIGN) carry the 'HIGH' region motif. Residues Cys207, His232, and Glu236 each contribute to the Zn(2+) site. Residues 264 to 268 (KMSKS) carry the 'KMSKS' region motif. An ATP-binding site is contributed by Lys267.

This sequence belongs to the class-I aminoacyl-tRNA synthetase family. Monomer. It depends on Zn(2+) as a cofactor.

It is found in the cytoplasm. It catalyses the reaction tRNA(Cys) + L-cysteine + ATP = L-cysteinyl-tRNA(Cys) + AMP + diphosphate. This is Cysteine--tRNA ligase from Clostridium acetobutylicum (strain ATCC 824 / DSM 792 / JCM 1419 / IAM 19013 / LMG 5710 / NBRC 13948 / NRRL B-527 / VKM B-1787 / 2291 / W).